The following is a 427-amino-acid chain: 3-phosphoshikimate 1-carboxyvinyltransferase (427 aa).

3-phosphoshikimate contacts are provided by Lys22, Ser23, and Arg27. Lys22 is a binding site for phosphoenolpyruvate. Phosphoenolpyruvate contacts are provided by Gly96 and Arg124. 7 residues coordinate 3-phosphoshikimate: Ser169, Ser170, Gln171, Ser197, Asp313, Asn336, and Lys340. Gln171 lines the phosphoenolpyruvate pocket. Asp313 (proton acceptor) is an active-site residue. Arg344, Arg386, and Lys411 together coordinate phosphoenolpyruvate.

This sequence belongs to the EPSP synthase family. In terms of assembly, monomer.

The protein localises to the cytoplasm. It carries out the reaction 3-phosphoshikimate + phosphoenolpyruvate = 5-O-(1-carboxyvinyl)-3-phosphoshikimate + phosphate. Its pathway is metabolic intermediate biosynthesis; chorismate biosynthesis; chorismate from D-erythrose 4-phosphate and phosphoenolpyruvate: step 6/7. Its function is as follows. Catalyzes the transfer of the enolpyruvyl moiety of phosphoenolpyruvate (PEP) to the 5-hydroxyl of shikimate-3-phosphate (S3P) to produce enolpyruvyl shikimate-3-phosphate and inorganic phosphate. The sequence is that of 3-phosphoshikimate 1-carboxyvinyltransferase from Escherichia coli O6:H1 (strain CFT073 / ATCC 700928 / UPEC).